The following is a 311-amino-acid chain: Malate dehydrogenase (311 aa).

Residues 7–13 (GAAGGIG) and Asp34 contribute to the NAD(+) site. Substrate-binding residues include Arg81 and Arg87. Residues Asn94 and 117-119 (ITN) contribute to the NAD(+) site. Positions 119 and 153 each coordinate substrate. The Proton acceptor role is filled by His177. NAD(+) is bound at residue Met227.

Belongs to the LDH/MDH superfamily. MDH type 1 family. As to quaternary structure, homodimer.

It catalyses the reaction (S)-malate + NAD(+) = oxaloacetate + NADH + H(+). Its function is as follows. Catalyzes the reversible oxidation of malate to oxaloacetate. The chain is Malate dehydrogenase (mdh) from Shewanella oneidensis (strain ATCC 700550 / JCM 31522 / CIP 106686 / LMG 19005 / NCIMB 14063 / MR-1).